The chain runs to 1305 residues: DNA-directed RNA polymerase subunit beta' (1305 aa).

Residues cysteine 59, cysteine 61, cysteine 74, and cysteine 77 each contribute to the Zn(2+) site. Residues aspartate 527, aspartate 529, and aspartate 531 each contribute to the Mg(2+) site. The Zn(2+) site is built by cysteine 922, cysteine 997, cysteine 1004, and cysteine 1007.

It belongs to the RNA polymerase beta' chain family. As to quaternary structure, the RNAP catalytic core consists of 2 alpha, 1 beta, 1 beta' and 1 omega subunit. When a sigma factor is associated with the core the holoenzyme is formed, which can initiate transcription. The cofactor is Mg(2+). Requires Zn(2+) as cofactor.

It catalyses the reaction RNA(n) + a ribonucleoside 5'-triphosphate = RNA(n+1) + diphosphate. Functionally, DNA-dependent RNA polymerase catalyzes the transcription of DNA into RNA using the four ribonucleoside triphosphates as substrates. In Ureaplasma parvum serovar 3 (strain ATCC 700970), this protein is DNA-directed RNA polymerase subunit beta'.